The sequence spans 562 residues: Dihydroxy-acid dehydratase 2 (562 aa).

Cys-50 is a binding site for [2Fe-2S] cluster. Position 82 (Asp-82) interacts with Mg(2+). [2Fe-2S] cluster is bound at residue Cys-123. Mg(2+)-binding residues include Asp-124, Lys-125, and Glu-447. Lys-125 is modified (N6-carboxylysine). Ser-473 acts as the Proton acceptor in catalysis.

It belongs to the IlvD/Edd family. As to quaternary structure, homodimer. [2Fe-2S] cluster is required as a cofactor. The cofactor is Mg(2+).

It carries out the reaction (2R)-2,3-dihydroxy-3-methylbutanoate = 3-methyl-2-oxobutanoate + H2O. The catalysed reaction is (2R,3R)-2,3-dihydroxy-3-methylpentanoate = (S)-3-methyl-2-oxopentanoate + H2O. The protein operates within amino-acid biosynthesis; L-isoleucine biosynthesis; L-isoleucine from 2-oxobutanoate: step 3/4. It participates in amino-acid biosynthesis; L-valine biosynthesis; L-valine from pyruvate: step 3/4. Its function is as follows. Functions in the biosynthesis of branched-chain amino acids. Catalyzes the dehydration of (2R,3R)-2,3-dihydroxy-3-methylpentanoate (2,3-dihydroxy-3-methylvalerate) into 2-oxo-3-methylpentanoate (2-oxo-3-methylvalerate) and of (2R)-2,3-dihydroxy-3-methylbutanoate (2,3-dihydroxyisovalerate) into 2-oxo-3-methylbutanoate (2-oxoisovalerate), the penultimate precursor to L-isoleucine and L-valine, respectively. In Bordetella pertussis (strain Tohama I / ATCC BAA-589 / NCTC 13251), this protein is Dihydroxy-acid dehydratase 2.